Reading from the N-terminus, the 82-residue chain is Small ribosomal subunit protein bS16 (82 aa).

Belongs to the bacterial ribosomal protein bS16 family.

This chain is Small ribosomal subunit protein bS16, found in Dehalococcoides mccartyi (strain ATCC BAA-2100 / JCM 16839 / KCTC 5957 / BAV1).